A 205-amino-acid chain; its full sequence is Ribosomal RNA small subunit methyltransferase G (205 aa).

Residues Gly-70, Leu-75, 124–125 (IE), and Arg-138 each bind S-adenosyl-L-methionine.

The protein belongs to the methyltransferase superfamily. RNA methyltransferase RsmG family.

The protein resides in the cytoplasm. It carries out the reaction guanosine(527) in 16S rRNA + S-adenosyl-L-methionine = N(7)-methylguanosine(527) in 16S rRNA + S-adenosyl-L-homocysteine. Its function is as follows. Specifically methylates the N7 position of guanine in position 527 of 16S rRNA. In Ruegeria sp. (strain TM1040) (Silicibacter sp.), this protein is Ribosomal RNA small subunit methyltransferase G.